The primary structure comprises 364 residues: Succinyl-diaminopimelate desuccinylase (364 aa).

His64 serves as a coordination point for Zn(2+). The active site involves Asp66. Asp95 is a Zn(2+) binding site. Residue Glu125 is the Proton acceptor of the active site. Residues Glu126, Glu154, and His339 each contribute to the Zn(2+) site.

It belongs to the peptidase M20A family. DapE subfamily. As to quaternary structure, homodimer. Requires Zn(2+) as cofactor. The cofactor is Co(2+).

It carries out the reaction N-succinyl-(2S,6S)-2,6-diaminopimelate + H2O = (2S,6S)-2,6-diaminopimelate + succinate. Its pathway is amino-acid biosynthesis; L-lysine biosynthesis via DAP pathway; LL-2,6-diaminopimelate from (S)-tetrahydrodipicolinate (succinylase route): step 3/3. In terms of biological role, catalyzes the hydrolysis of N-succinyl-L,L-diaminopimelic acid (SDAP), forming succinate and LL-2,6-diaminopimelate (DAP), an intermediate involved in the bacterial biosynthesis of lysine and meso-diaminopimelic acid, an essential component of bacterial cell walls. The chain is Succinyl-diaminopimelate desuccinylase from Nitratiruptor sp. (strain SB155-2).